The sequence spans 86 residues: Cytochrome c oxidase subunit 6B1 (86 aa).

Ala2 is subject to N-acetylalanine. Residues Thr27–Trp73 form the CHCH domain. Residues Cys30–Cys40 carry the Cx9C motif motif. 2 disulfide bridges follow: Cys30/Cys65 and Cys40/Cys54. The Cx10C motif motif lies at Cys54–Cys65.

It belongs to the cytochrome c oxidase subunit 6B family. As to quaternary structure, component of the cytochrome c oxidase (complex IV, CIV), a multisubunit enzyme composed of 14 subunits. The complex is composed of a catalytic core of 3 subunits MT-CO1, MT-CO2 and MT-CO3, encoded in the mitochondrial DNA, and 11 supernumerary subunits COX4I, COX5A, COX5B, COX6A, COX6B, COX6C, COX7A, COX7B, COX7C, COX8 and NDUFA4, which are encoded in the nuclear genome. The complex exists as a monomer or a dimer and forms supercomplexes (SCs) in the inner mitochondrial membrane with NADH-ubiquinone oxidoreductase (complex I, CI) and ubiquinol-cytochrome c oxidoreductase (cytochrome b-c1 complex, complex III, CIII), resulting in different assemblies (supercomplex SCI(1)III(2)IV(1) and megacomplex MCI(2)III(2)IV(2)).

The protein localises to the mitochondrion inner membrane. It participates in energy metabolism; oxidative phosphorylation. Its function is as follows. Component of the cytochrome c oxidase, the last enzyme in the mitochondrial electron transport chain which drives oxidative phosphorylation. The respiratory chain contains 3 multisubunit complexes succinate dehydrogenase (complex II, CII), ubiquinol-cytochrome c oxidoreductase (cytochrome b-c1 complex, complex III, CIII) and cytochrome c oxidase (complex IV, CIV), that cooperate to transfer electrons derived from NADH and succinate to molecular oxygen, creating an electrochemical gradient over the inner membrane that drives transmembrane transport and the ATP synthase. Cytochrome c oxidase is the component of the respiratory chain that catalyzes the reduction of oxygen to water. Electrons originating from reduced cytochrome c in the intermembrane space (IMS) are transferred via the dinuclear copper A center (CU(A)) of subunit 2 and heme A of subunit 1 to the active site in subunit 1, a binuclear center (BNC) formed by heme A3 and copper B (CU(B)). The BNC reduces molecular oxygen to 2 water molecules using 4 electrons from cytochrome c in the IMS and 4 protons from the mitochondrial matrix. This chain is Cytochrome c oxidase subunit 6B1 (COX6B1), found in Pongo abelii (Sumatran orangutan).